The primary structure comprises 216 residues: ATP phosphoribosyltransferase (216 aa).

Belongs to the ATP phosphoribosyltransferase family. Short subfamily. As to quaternary structure, heteromultimer composed of HisG and HisZ subunits.

The protein localises to the cytoplasm. The enzyme catalyses 1-(5-phospho-beta-D-ribosyl)-ATP + diphosphate = 5-phospho-alpha-D-ribose 1-diphosphate + ATP. It functions in the pathway amino-acid biosynthesis; L-histidine biosynthesis; L-histidine from 5-phospho-alpha-D-ribose 1-diphosphate: step 1/9. In terms of biological role, catalyzes the condensation of ATP and 5-phosphoribose 1-diphosphate to form N'-(5'-phosphoribosyl)-ATP (PR-ATP). Has a crucial role in the pathway because the rate of histidine biosynthesis seems to be controlled primarily by regulation of HisG enzymatic activity. The chain is ATP phosphoribosyltransferase from Synechococcus sp. (strain CC9902).